Consider the following 156-residue polypeptide: Small ribosomal subunit protein uS7 (156 aa).

The protein belongs to the universal ribosomal protein uS7 family. Part of the 30S ribosomal subunit. Contacts proteins S9 and S11.

In terms of biological role, one of the primary rRNA binding proteins, it binds directly to 16S rRNA where it nucleates assembly of the head domain of the 30S subunit. Is located at the subunit interface close to the decoding center, probably blocks exit of the E-site tRNA. In Marinobacter nauticus (strain ATCC 700491 / DSM 11845 / VT8) (Marinobacter aquaeolei), this protein is Small ribosomal subunit protein uS7.